We begin with the raw amino-acid sequence, 334 residues long: N-acetyl-S-alkylcysteine monooxygenase (334 aa).

This sequence to bacterial alkanal monooxygenase alpha and beta chains.

It catalyses the reaction N-acetyl-S-benzyl-L-cysteine + FMNH2 + O2 = (R)-N-acetyl-S-benzyl-L-cysteine sulfoxide + FMN + H2O + H(+). The enzyme catalyses N-acetyl-S-methyl-L-cysteine + FMNH2 + O2 = (R)-N-acetyl-S-methyl-L-cysteine sulfoxide + FMN + H2O + H(+). The protein operates within amino-acid metabolism. Its function is as follows. Involved in a cysteine salvage pathway from S-alkylcysteine. Catalyzes the oxidation of N-acetyl-S-benzyl-L-cysteine and N-acetyl-S-methyl-L-cysteine to (R)-N-acetyl-S-benzyl-L-cysteine sulfoxide and (R)-N-acetyl-S-methyl-L-cysteine sulfoxide, respectively. This pathway is likely important in the catabolism of alkylated cysteine generated by proteolysis of alkylated glutathione formed in the detoxification of a wide range of electrophiles. In Bacillus subtilis (strain 168), this protein is N-acetyl-S-alkylcysteine monooxygenase.